We begin with the raw amino-acid sequence, 457 residues long: Exodeoxyribonuclease 7 large subunit (457 aa).

The protein belongs to the XseA family. As to quaternary structure, heterooligomer composed of large and small subunits.

The protein resides in the cytoplasm. The catalysed reaction is Exonucleolytic cleavage in either 5'- to 3'- or 3'- to 5'-direction to yield nucleoside 5'-phosphates.. Its function is as follows. Bidirectionally degrades single-stranded DNA into large acid-insoluble oligonucleotides, which are then degraded further into small acid-soluble oligonucleotides. The protein is Exodeoxyribonuclease 7 large subunit of Citrobacter koseri (strain ATCC BAA-895 / CDC 4225-83 / SGSC4696).